The sequence spans 229 residues: Uracil-DNA glycosylase (229 aa).

The Proton acceptor role is filled by D64.

It belongs to the uracil-DNA glycosylase (UDG) superfamily. UNG family. Monomer.

Its subcellular location is the cytoplasm. The catalysed reaction is Hydrolyzes single-stranded DNA or mismatched double-stranded DNA and polynucleotides, releasing free uracil.. Functionally, excises uracil residues from the DNA which can arise as a result of misincorporation of dUMP residues by DNA polymerase or due to deamination of cytosine. The protein is Uracil-DNA glycosylase of Escherichia coli O157:H7.